A 130-amino-acid polypeptide reads, in one-letter code: MSMQDPIADMLTRIRNGQAANKVAISMPSSKLKVAIANVLAAEGYIESVKVLEGAKPELEITLKYFQGKPVVESIQRVSRPGLRIYKRKDELPKVMGGLGVAVVSTSKGVMTDRAARQAGLGGEIICYVA.

Belongs to the universal ribosomal protein uS8 family. As to quaternary structure, part of the 30S ribosomal subunit. Contacts proteins S5 and S12.

Its function is as follows. One of the primary rRNA binding proteins, it binds directly to 16S rRNA central domain where it helps coordinate assembly of the platform of the 30S subunit. This is Small ribosomal subunit protein uS8 from Actinobacillus succinogenes (strain ATCC 55618 / DSM 22257 / CCUG 43843 / 130Z).